A 339-amino-acid chain; its full sequence is DNA-directed RNA polymerase subunit alpha (339 aa).

Residues 1-233 (MVREEVAGST…DLFLPFLHAE (233 aa)) are alpha N-terminal domain (alpha-NTD). The segment at 264 to 339 (KKGIPLNSIF…IDLLKNKLSF (76 aa)) is alpha C-terminal domain (alpha-CTD).

Belongs to the RNA polymerase alpha chain family. In terms of assembly, in plastids the minimal PEP RNA polymerase catalytic core is composed of four subunits: alpha, beta, beta', and beta''. When a (nuclear-encoded) sigma factor is associated with the core the holoenzyme is formed, which can initiate transcription.

It localises to the plastid. The protein resides in the chloroplast. The enzyme catalyses RNA(n) + a ribonucleoside 5'-triphosphate = RNA(n+1) + diphosphate. Functionally, DNA-dependent RNA polymerase catalyzes the transcription of DNA into RNA using the four ribonucleoside triphosphates as substrates. In Aegilops tauschii (Tausch's goatgrass), this protein is DNA-directed RNA polymerase subunit alpha.